A 285-amino-acid polypeptide reads, in one-letter code: OPEP-3 protein (285 aa).

This Orgyia pseudotsugata multicapsid polyhedrosis virus (OpMNPV) protein is OPEP-3 protein (OPEP-3).